We begin with the raw amino-acid sequence, 213 residues long: High frequency lysogenization protein HflD homolog (213 aa).

The stretch at Gln-79–Gln-126 forms a coiled coil.

This sequence belongs to the HflD family.

It is found in the cytoplasm. The protein resides in the cell inner membrane. The protein is High frequency lysogenization protein HflD homolog of Shigella dysenteriae serotype 1 (strain Sd197).